A 341-amino-acid chain; its full sequence is Alpha-ketoglutarate-dependent dioxygenase oryG (341 aa).

Histidine 100 lines the substrate pocket. 2 residues coordinate Fe cation: histidine 140 and aspartate 142. Threonine 167 contributes to the 2-oxoglutarate binding site. Position 299 (histidine 299) interacts with Fe cation. Residues arginine 311 and arginine 315 each coordinate 2-oxoglutarate. Arginine 315 contacts substrate.

It belongs to the TfdA dioxygenase family. The cofactor is Fe(2+).

Its pathway is secondary metabolite biosynthesis. Alpha-ketoglutarate-dependent dioxygenase; part of the gene cluster that mediates the biosynthesis of oryzines, natural products with an unusual maleidride backbone. The two subunits of the fungal fatty acid synthase oryfasA and oryfasB probably form octenoic acid. This fatty acid is most likely activated by the acyl-CoA ligase oryP to give octenyl-CoA before the citrate synthase-like protein oryE catalyzes condensation with oxaloacetate to form tricarboxylic acid. The next steps of the pathways are conjectural, but a favorite possible route has been proposed, beginning with decarboxylation and concomitant dehydration by the decarboxylase oryM, followed by tautomerization, which may lead to the production of a diene intermediate. Reduction of this diene intermediate could give the known metabolite piliformic acid. On the pathway to oryzine B and oryzine A, however, hydroxylation of the diene by the alpha-ketoglutarate-dependent dioxygenase oryG and lactonisation by the lactonohydrolases oryH or oryL could give oryzine B directly. Finally, enoyl reduction by the dehydrogenase oryD would then convert oryzine B into oryzine A. The sequence is that of Alpha-ketoglutarate-dependent dioxygenase oryG from Aspergillus oryzae (strain ATCC 42149 / RIB 40) (Yellow koji mold).